The sequence spans 269 residues: Shikimate dehydrogenase (NADP(+)) (269 aa).

Shikimate contacts are provided by residues 17 to 19 and Thr64; that span reads SKS. The active-site Proton acceptor is Lys68. Glu80 provides a ligand contact to NADP(+). Asn89 and Asp105 together coordinate shikimate. Residues 130–134, 154–159, and Met213 contribute to the NADP(+) site; these read GAGGA and NRTRAK. Residue Tyr215 coordinates shikimate. An NADP(+)-binding site is contributed by Gly237.

This sequence belongs to the shikimate dehydrogenase family. As to quaternary structure, homodimer.

The enzyme catalyses shikimate + NADP(+) = 3-dehydroshikimate + NADPH + H(+). The protein operates within metabolic intermediate biosynthesis; chorismate biosynthesis; chorismate from D-erythrose 4-phosphate and phosphoenolpyruvate: step 4/7. Its function is as follows. Involved in the biosynthesis of the chorismate, which leads to the biosynthesis of aromatic amino acids. Catalyzes the reversible NADPH linked reduction of 3-dehydroshikimate (DHSA) to yield shikimate (SA). This Neisseria meningitidis serogroup B (strain ATCC BAA-335 / MC58) protein is Shikimate dehydrogenase (NADP(+)).